The chain runs to 149 residues: Protegrin-4 (149 aa).

The N-terminal stretch at 1 to 29 (METQRASLCLGRWSLWLLLLALVVPSASA) is a signal peptide. The propeptide occupies 30 to 130 (QALSYREAVL…DITCNEVQGV (101 aa)). Positions 61–80 (DQPPKADEDPGTPKPVSFTV) are disordered. 4 disulfide bridges follow: cysteine 85–cysteine 96, cysteine 107–cysteine 124, cysteine 136–cysteine 145, and cysteine 138–cysteine 143. Arginine 148 carries the arginine amide modification.

This sequence belongs to the cathelicidin family.

The protein localises to the secreted. Its function is as follows. Microbicidal activity. The chain is Protegrin-4 (NPG4) from Sus scrofa (Pig).